A 607-amino-acid polypeptide reads, in one-letter code: Lipid-A-disaccharide synthase (607 aa).

The interval 1 to 224 (MFPQKITLWL…ASREAFRKPF (224 aa)) is unknown. The tract at residues 225–607 (SNSCFISAGE…CLSLIFETAS (383 aa)) is lipid-A-disaccharide synthase.

It in the C-terminal section; belongs to the LpxB family.

It carries out the reaction a lipid X + a UDP-2-N,3-O-bis[(3R)-3-hydroxyacyl]-alpha-D-glucosamine = a lipid A disaccharide + UDP + H(+). It functions in the pathway bacterial outer membrane biogenesis; LPS lipid A biosynthesis. Its function is as follows. Condensation of UDP-2,3-diacylglucosamine and 2,3-diacylglucosamine-1-phosphate to form lipid A disaccharide, a precursor of lipid A, a phosphorylated glycolipid that anchors the lipopolysaccharide to the outer membrane of the cell. The protein is Lipid-A-disaccharide synthase (lpxB) of Chlamydia trachomatis serovar A (strain ATCC VR-571B / DSM 19440 / HAR-13).